The following is a 97-amino-acid chain: MAKTASPGDTAAGNGTEPLPDKYETALAELESLVARMEGGALSLEDSLAAYRRGAALVAFCQQQLEKVEQQVRVLDGATLKPLSSGTAATDGDDDDL.

The disordered stretch occupies residues 1–22 (MAKTASPGDTAAGNGTEPLPDK).

This sequence belongs to the XseB family. Heterooligomer composed of large and small subunits.

The protein resides in the cytoplasm. It catalyses the reaction Exonucleolytic cleavage in either 5'- to 3'- or 3'- to 5'-direction to yield nucleoside 5'-phosphates.. Bidirectionally degrades single-stranded DNA into large acid-insoluble oligonucleotides, which are then degraded further into small acid-soluble oligonucleotides. This Burkholderia vietnamiensis (strain G4 / LMG 22486) (Burkholderia cepacia (strain R1808)) protein is Exodeoxyribonuclease 7 small subunit.